Reading from the N-terminus, the 342-residue chain is Nucleoid-associated protein Sfri_2491 (342 aa).

The protein belongs to the YejK family.

It is found in the cytoplasm. The protein localises to the nucleoid. The sequence is that of Nucleoid-associated protein Sfri_2491 from Shewanella frigidimarina (strain NCIMB 400).